The following is a 153-amino-acid chain: Ribosome maturation factor RimP (153 aa).

The protein belongs to the RimP family.

The protein localises to the cytoplasm. Its function is as follows. Required for maturation of 30S ribosomal subunits. In Burkholderia mallei (strain NCTC 10229), this protein is Ribosome maturation factor RimP.